The following is a 425-amino-acid chain: UPF0597 protein Moth_1414 (425 aa).

The protein belongs to the UPF0597 family.

In Moorella thermoacetica (strain ATCC 39073 / JCM 9320), this protein is UPF0597 protein Moth_1414.